The primary structure comprises 470 residues: Na(+)-translocating NADH-quinone reductase subunit A (470 aa).

Belongs to the NqrA family. As to quaternary structure, composed of six subunits; NqrA, NqrB, NqrC, NqrD, NqrE and NqrF.

The enzyme catalyses a ubiquinone + n Na(+)(in) + NADH + H(+) = a ubiquinol + n Na(+)(out) + NAD(+). In terms of biological role, NQR complex catalyzes the reduction of ubiquinone-1 to ubiquinol by two successive reactions, coupled with the transport of Na(+) ions from the cytoplasm to the periplasm. NqrA to NqrE are probably involved in the second step, the conversion of ubisemiquinone to ubiquinol. In Chlamydia caviae (strain ATCC VR-813 / DSM 19441 / 03DC25 / GPIC) (Chlamydophila caviae), this protein is Na(+)-translocating NADH-quinone reductase subunit A.